The sequence spans 180 residues: Acireductone dioxygenase (180 aa).

Residues histidine 97, histidine 99, glutamate 103, and histidine 141 each contribute to the Fe(2+) site. Ni(2+) is bound by residues histidine 97, histidine 99, glutamate 103, and histidine 141.

This sequence belongs to the acireductone dioxygenase (ARD) family. As to quaternary structure, monomer. Fe(2+) is required as a cofactor. The cofactor is Ni(2+).

The catalysed reaction is 1,2-dihydroxy-5-(methylsulfanyl)pent-1-en-3-one + O2 = 3-(methylsulfanyl)propanoate + CO + formate + 2 H(+). The enzyme catalyses 1,2-dihydroxy-5-(methylsulfanyl)pent-1-en-3-one + O2 = 4-methylsulfanyl-2-oxobutanoate + formate + 2 H(+). It participates in amino-acid biosynthesis; L-methionine biosynthesis via salvage pathway; L-methionine from S-methyl-5-thio-alpha-D-ribose 1-phosphate: step 5/6. In terms of biological role, catalyzes 2 different reactions between oxygen and the acireductone 1,2-dihydroxy-3-keto-5-methylthiopentene (DHK-MTPene) depending upon the metal bound in the active site. Fe-containing acireductone dioxygenase (Fe-ARD) produces formate and 2-keto-4-methylthiobutyrate (KMTB), the alpha-ketoacid precursor of methionine in the methionine recycle pathway. Ni-containing acireductone dioxygenase (Ni-ARD) produces methylthiopropionate, carbon monoxide and formate, and does not lie on the methionine recycle pathway. This Citrobacter koseri (strain ATCC BAA-895 / CDC 4225-83 / SGSC4696) protein is Acireductone dioxygenase.